A 205-amino-acid chain; its full sequence is Large ribosomal subunit protein uL3c (205 aa).

Residues 130-150 are disordered; the sequence is RGPMSHGSKNHRQPGSIGAGT.

The protein belongs to the universal ribosomal protein uL3 family. As to quaternary structure, part of the 50S ribosomal subunit.

The protein resides in the plastid. It is found in the chloroplast. One of the primary rRNA binding proteins, it binds directly near the 3'-end of the 23S rRNA, where it nucleates assembly of the 50S subunit. The chain is Large ribosomal subunit protein uL3c (rpl3) from Gracilaria tenuistipitata var. liui (Red alga).